Reading from the N-terminus, the 129-residue chain is Cytochrome c' (129 aa).

Residues Arg12, Gln13, Thr69, Glu70, Cys119, Cys122, and His123 each coordinate heme c.

Post-translationally, binds 1 heme c group covalently per subunit.

Its function is as follows. Cytochrome c' is the most widely occurring bacterial c-type cytochrome. Cytochromes c' are high-spin proteins and the heme has no sixth ligand. Their exact function is not known. This is Cytochrome c' from Rubrivivax gelatinosus (Rhodocyclus gelatinosus).